Consider the following 400-residue polypeptide: Argininosuccinate synthase (400 aa).

8-16 contributes to the ATP binding site; that stretch reads AYSGGLDTS. 2 residues coordinate L-citrulline: Tyr-87 and Ser-92. An ATP-binding site is contributed by Gly-117. L-aspartate is bound by residues Thr-119, Asn-123, and Asp-124. Asn-123 is an L-citrulline binding site. L-citrulline is bound by residues Arg-127, Ser-175, Glu-259, and Tyr-271.

This sequence belongs to the argininosuccinate synthase family. Type 1 subfamily. In terms of assembly, homotetramer.

The protein localises to the cytoplasm. It catalyses the reaction L-citrulline + L-aspartate + ATP = 2-(N(omega)-L-arginino)succinate + AMP + diphosphate + H(+). It functions in the pathway amino-acid biosynthesis; L-arginine biosynthesis; L-arginine from L-ornithine and carbamoyl phosphate: step 2/3. This is Argininosuccinate synthase from Parafrankia sp. (strain EAN1pec).